We begin with the raw amino-acid sequence, 151 residues long: Deoxyuridine 5'-triphosphate nucleotidohydrolase (151 aa).

Substrate is bound by residues R70 to G72, N83, L87 to D89, and M97.

Belongs to the dUTPase family. Mg(2+) serves as cofactor.

It catalyses the reaction dUTP + H2O = dUMP + diphosphate + H(+). Its pathway is pyrimidine metabolism; dUMP biosynthesis; dUMP from dCTP (dUTP route): step 2/2. This enzyme is involved in nucleotide metabolism: it produces dUMP, the immediate precursor of thymidine nucleotides and it decreases the intracellular concentration of dUTP so that uracil cannot be incorporated into DNA. In Pseudomonas syringae pv. syringae (strain B728a), this protein is Deoxyuridine 5'-triphosphate nucleotidohydrolase.